A 389-amino-acid chain; its full sequence is MAFTGDELARMLQFKDKMISSAGSALRFEKVVQEAMASGIVLQHITCIKVRICDNSDILSDRQLRCLLINGLYPFEGRMSMFGVTEEWEGASAAPERQVVFLLSSTGQVLGYEDGVIFYLSPTFSDFWTTAMEFSCQNAILSNFIAQKSRDEYSDQFQKYFTRMRHTPISLTGVLPRRFQKVESGACVEEDARASMRPIQSDSFGAKGPFCWPTEELLQPSAKKDVGGTVCMALSCQEDNSARHCTIYGLTKTPGIKIMLSRHTQTDRSEAMCDAATQTEDVVDNSSETLFLGGNLVHQSILETEVQATAKNTFDVSDPRIDSVYDTTVVGAMATDDVGCKHVQGGASLAQEKPLKGYCIIATPSECKPNIHWLKSPENAVHESAAVLR.

Belongs to the beta-herpesvirinae UL38 protein family. In terms of assembly, interacts with host MDM2; this interaction leads to the stabilization of host TP53.

It localises to the host cytoplasm. The protein localises to the host nucleus. Functionally, plays a role in the inhibition of host apoptosis to facilitate efficient viral replication. Promotes stabilization and inactivation of host TP53 through interaction with host MDM2. In Homo sapiens (Human), this protein is Apoptosis inhibitor U19 (U19).